We begin with the raw amino-acid sequence, 206 residues long: U-scoloptoxin(08)-Cw1a (206 aa).

The signal sequence occupies residues 1-24 (MIFRVNLLFSCFCFVLFVFDFSNA). Positions 25–164 (SKYDQGSLNI…DLPELKRRKR (140 aa)) are excised as a propeptide. An RLWRNWE 1; approximate repeat occupies 37–43 (RLWRDWE). One copy of the RLWRNWE 2; approximate repeat lies at 71-77 (RLWRDWE). The stretch at 104 to 110 (RLWRDWE) is one RLWRNWE 3; approximate repeat. The RLWRNWE 4 repeat unit spans residues 137 to 143 (RLWRNWE). An RLWRNWE 5; approximate repeat occupies 164-170 (RLWRNED).

The protein belongs to the scoloptoxin-08 family. In terms of processing, contains 3 disulfide bonds. In terms of tissue distribution, expressed by the venom gland.

Its subcellular location is the secreted. The protein is U-scoloptoxin(08)-Cw1a of Cormocephalus westwoodi (Westwood's green centipede).